A 686-amino-acid chain; its full sequence is Osmo-dependent choline transporter BetT2 (686 aa).

Topologically, residues 1 to 22 (MATDNPRAVDDQETHPKDRLNR) are cytoplasmic. The chain crosses the membrane as a helical span at residues 23 to 43 (VVFYVSALIILIFSLTTILFN). Over 44 to 60 (DFANRALNQVLDWVSST) the chain is Periplasmic. The helical transmembrane segment at 61–81 (FSWYYLLAATLYMVFVIFIAC) threads the bilayer. The Cytoplasmic portion of the chain corresponds to 82-100 (SRYGNIKLGPKHSKPEFSL). The chain crosses the membrane as a helical span at residues 101–121 (LSWSAMLFSAGIGIDLMFFSV). Topologically, residues 122–150 (AEPLSHYMHPPVGEGQTYEAARQGMVWTL) are periplasmic. Residues 151 to 171 (FHYGLTGWCMYALIGMALGYF) traverse the membrane as a helical segment. At 172–203 (SYRYNLPLTIRSALYPIFGKKINGPIGHSVDT) the chain is on the cytoplasmic side. The chain crosses the membrane as a helical span at residues 204 to 224 (AAVIGTIFGIATTCGIGVVQL). The Periplasmic portion of the chain corresponds to 225 to 237 (NYGLHVLFDLPEN). Residues 238–258 (LWVQTALILVAVIITIISVTS) traverse the membrane as a helical segment. The Cytoplasmic portion of the chain corresponds to 259–265 (GVNKGLR). The chain crosses the membrane as a helical span at residues 266-286 (ILSEVNIYVSVGLMLFILFLG). At 287–325 (NTEFLLNALVQNVGDYLSRFPSLALESFAFDQPKEWMNS) the chain is on the periplasmic side. A helical membrane pass occupies residues 326–346 (WTLFFWAWWVAWSPFVGLFLA). Over 347–356 (RISRGRTIRE) the chain is Cytoplasmic. The helical transmembrane segment at 357-377 (FVSGTLIIPLLFTLTWLSIFG) threads the bilayer. Topologically, residues 378–412 (NSALHNVIFDGNIALAETVLSNPAHGFYDLLAQYP) are periplasmic. Residues 413–433 (WFPFIAGVATITGLLFYVTSA) traverse the membrane as a helical segment. Over 434–459 (DSGALVLGNFTTQFTNIDHDAPRWLS) the chain is Cytoplasmic. Residues 460–480 (VFWAVAIGLLTLAMLMTNGIT) traverse the membrane as a helical segment. At 481–484 (ALQN) the chain is on the periplasmic side. A helical membrane pass occupies residues 485–505 (ATIIMGLPFSFVMFLVMAGLY). Residues 506 to 686 (KSLRLEDYRQ…NRPLFPDPKA (181 aa)) lie on the Cytoplasmic side of the membrane.

The protein belongs to the BCCT transporter (TC 2.A.15) family.

It localises to the cell inner membrane. Uptake of choline in the presence of high salinity. May primarily serve for osmoprotection. This chain is Osmo-dependent choline transporter BetT2, found in Acinetobacter baylyi (strain ATCC 33305 / BD413 / ADP1).